Consider the following 339-residue polypeptide: MamK-like protein (339 aa).

ATP is bound by residues 18 to 19 (YS), D74, 162 to 164 (AWT), and 216 to 220 (KEQFA).

Belongs to the FtsA/MreB family. MamK subfamily. Forms cytoplasmic filament polymers. Forms filaments with MamK.

Its subcellular location is the cytoplasm. It is found in the cytoskeleton. It catalyses the reaction ATP + H2O = ADP + phosphate + H(+). In terms of biological role, protein with ATPase activity which forms pole-to-pole filaments in vivo, probably with MamK. Efficient filament formation requires MamK. Probably promotes turnover of MamK filaments, by providing a monomer pool. In vivo, in the absence of its paralog MamK, forms thin filaments from pole to pole. In vitro forms straight filaments and bundles in the absence of ATP. Filament formation is triggered by KCl and MgCl(2); polymerizes more slowly and makes thinner filaments than MamK. Expression in E.coli yields a filament in the cell's longitudinal axis; the protein nucleates at one pole or the cell septum. This is MamK-like protein from Paramagnetospirillum magneticum (strain ATCC 700264 / AMB-1) (Magnetospirillum magneticum).